The sequence spans 215 residues: Nascent polypeptide-associated complex subunit alpha (215 aa).

A disordered region spans residues 1–81 (MPGEATETVP…SEKKARKAMS (81 aa)). The segment covering 9 to 21 (VPVTEQEMQQPQV) has biased composition (polar residues). A compositionally biased stretch (acidic residues) spans 29–42 (SDSDDSVPELEEQD). The segment covering 43–57 (SAQTQTQQAQLAAAA) has biased composition (low complexity). Residues 70–135 (SRSEKKARKA…AKIEDLSQQA (66 aa)) enclose the NAC-A/B domain. One can recognise a UBA domain in the interval 176 to 213 (VEVKDIELVMSQANVSRAKAVRALKNNNNDIVNAIMEL).

It belongs to the NAC-alpha family.

May promote appropriate targeting of ribosome-nascent polypeptide complexes. The polypeptide is Nascent polypeptide-associated complex subunit alpha (naca) (Oreochromis niloticus (Nile tilapia)).